The primary structure comprises 294 residues: UPF0761 membrane protein YPN_0254 (294 aa).

A run of 7 helical transmembrane segments spans residues 44–64, 67–87, 108–128, 136–156, 185–205, 212–232, and 246–266; these read LLSL…FPMF, ISIK…GDII, GLIV…NIIW, LVFS…LVGA, VFPL…VPTV, ALIG…GFAM, and VLAV…IVLL.

This sequence belongs to the UPF0761 family.

Its subcellular location is the cell inner membrane. The protein is UPF0761 membrane protein YPN_0254 of Yersinia pestis bv. Antiqua (strain Nepal516).